A 264-amino-acid chain; its full sequence is MGRVIRAQRKGRANGVYKSHKSGRIAPAQYRVYDFAERQGYIRGCIRDIVHEPGRGAPLAEVAFRDPYRYKTNKEHFIAAEGQYSGQYVYCGLKAQIAVGNVLPINRIPEGTVVCNVEEKVGDRGTFSRASGCYATIIGHSEDGDKTRIRLPSGARKTIPGSCRATVGIVAGGGRTDKPILKAGNQFHKYARKRKSWPRVRGVAMNPVDHPHGGGNHQHIGHPATVSKWASAGQKVGLRAARRTGLVRGGQKEKMAMKAAAAGV.

Belongs to the universal ribosomal protein uL2 family.

Its subcellular location is the cytoplasm. The chain is Large ribosomal subunit protein uL2 (RPL8) from Tetrahymena thermophila (strain SB210).